The chain runs to 200 residues: Large ribosomal subunit protein uL4 (200 aa).

A disordered region spans residues 43–71; the sequence is RAQKTRAEVSGSGKKPWRQKGTGRARSGD.

This sequence belongs to the universal ribosomal protein uL4 family. In terms of assembly, part of the 50S ribosomal subunit.

Its function is as follows. One of the primary rRNA binding proteins, this protein initially binds near the 5'-end of the 23S rRNA. It is important during the early stages of 50S assembly. It makes multiple contacts with different domains of the 23S rRNA in the assembled 50S subunit and ribosome. Functionally, forms part of the polypeptide exit tunnel. The polypeptide is Large ribosomal subunit protein uL4 (Pasteurella multocida (strain Pm70)).